Reading from the N-terminus, the 414-residue chain is Esterase FrsA (414 aa).

This sequence belongs to the FrsA family.

It carries out the reaction a carboxylic ester + H2O = an alcohol + a carboxylate + H(+). Its function is as follows. Catalyzes the hydrolysis of esters. This Escherichia coli O7:K1 (strain IAI39 / ExPEC) protein is Esterase FrsA.